A 120-amino-acid polypeptide reads, in one-letter code: MMNGRPGHEPLKFLPDEARSLPPPKLNDPRLVYMGLLGYCTGLMDNMLRMRPVMRAGLHRQLLFVTSFVFAGYFYLKRQNYLYAVKDHDMFGYIKLHPEDFPEKEKKTYAEILEPFHPVR.

Residues Gly-57–Leu-76 form a helical membrane-spanning segment.

This sequence belongs to the complex I NDUFC2 subunit family. Complex I is composed of 45 different subunits. Interacts with TMEM242.

It localises to the mitochondrion inner membrane. Its function is as follows. Accessory subunit of the mitochondrial membrane respiratory chain NADH dehydrogenase (Complex I), that is believed not to be involved in catalysis but required for the complex assembly. Complex I functions in the transfer of electrons from NADH to the respiratory chain. The immediate electron acceptor for the enzyme is believed to be ubiquinone. This is NADH dehydrogenase [ubiquinone] 1 subunit C2 from Mus musculus (Mouse).